A 313-amino-acid chain; its full sequence is Porphobilinogen deaminase (313 aa).

C240 is modified (S-(dipyrrolylmethanemethyl)cysteine).

This sequence belongs to the HMBS family. In terms of assembly, monomer. The cofactor is dipyrromethane.

It catalyses the reaction 4 porphobilinogen + H2O = hydroxymethylbilane + 4 NH4(+). It functions in the pathway porphyrin-containing compound metabolism; protoporphyrin-IX biosynthesis; coproporphyrinogen-III from 5-aminolevulinate: step 2/4. Functionally, tetrapolymerization of the monopyrrole PBG into the hydroxymethylbilane pre-uroporphyrinogen in several discrete steps. The chain is Porphobilinogen deaminase from Moorella thermoacetica (strain ATCC 39073 / JCM 9320).